The sequence spans 272 residues: Glutamate racemase (272 aa).

Substrate-binding positions include 16 to 17 (DS) and 48 to 49 (YG). C79 (proton donor/acceptor) is an active-site residue. 80 to 81 (NT) contributes to the substrate binding site. C191 functions as the Proton donor/acceptor in the catalytic mechanism. 192–193 (TH) lines the substrate pocket.

Belongs to the aspartate/glutamate racemases family.

It carries out the reaction L-glutamate = D-glutamate. The protein operates within cell wall biogenesis; peptidoglycan biosynthesis. Functionally, provides the (R)-glutamate required for cell wall biosynthesis. In Chlorobium phaeobacteroides (strain DSM 266 / SMG 266 / 2430), this protein is Glutamate racemase.